Reading from the N-terminus, the 170-residue chain is Transcription factor E (170 aa).

One can recognise an HTH TFE/IIEalpha-type domain in the interval 1–93; that stretch reads MKDVYLYIVE…TWYVNDEVIS (93 aa).

The protein belongs to the TFE family. In terms of assembly, monomer. Interaction with RNA polymerase subunits RpoF and RpoE is necessary for Tfe stimulatory transcription activity. Able to interact with Tbp and RNA polymerase in the absence of DNA promoter. Interacts both with the preinitiation and elongation complexes.

Functionally, transcription factor that plays a role in the activation of archaeal genes transcribed by RNA polymerase. Facilitates transcription initiation by enhancing TATA-box recognition by TATA-box-binding protein (Tbp), and transcription factor B (Tfb) and RNA polymerase recruitment. Not absolutely required for transcription in vitro, but particularly important in cases where Tbp or Tfb function is not optimal. It dynamically alters the nucleic acid-binding properties of RNA polymerases by stabilizing the initiation complex and destabilizing elongation complexes. Seems to translocate with the RNA polymerase following initiation and acts by binding to the non template strand of the transcription bubble in elongation complexes. In Pyrobaculum calidifontis (strain DSM 21063 / JCM 11548 / VA1), this protein is Transcription factor E.